The following is a 1157-amino-acid chain: Myosin tail region-interacting protein MTI1 (1157 aa).

The SH3 domain occupies 5–69 (EVPFKVVAQF…PKSFVAVQGS (65 aa)). Disordered stretches follow at residues 68 to 116 (GSEV…GPVP) and 135 to 156 (TAVSAQVQHDSSSGNGERKVPM). Polar residues predominate over residues 77 to 89 (SSPNTGSTEQRTI). Residues 93–110 (VEQKDLPEPISPETKKET) are compositionally biased toward basic and acidic residues. Serine 103 is modified (phosphoserine). A compositionally biased stretch (polar residues) spans 138–149 (SAQVQHDSSSGN). 2 positions are modified to phosphoserine: serine 158 and serine 166. Disordered stretches follow at residues 231 to 256 (PEPINRAQVESGRIETENDQLKKDLP) and 284 to 888 (KKAK…PKVA). Coiled-coil stretches lie at residues 234 to 301 (INRA…NKNE) and 356 to 430 (EKEQ…GASR). 3 stretches are compositionally biased toward basic and acidic residues: residues 242-256 (GRIETENDQLKKDLP), 284-296 (KKAKLEQEHERSA), and 312-383 (NEKT…RGEN). The span at 398–411 (EGDNDEEKEEEDSE) shows a compositional bias: acidic residues. Composition is skewed to basic and acidic residues over residues 412–423 (ENRRAALRERMA) and 506–524 (KTLDPHATTEHEQKQEHGT). The span at 544–558 (DSDEDTDDHEFEDAN) shows a compositional bias: acidic residues. Phosphoserine is present on serine 565. Over residues 574-585 (GNNESENVNSGE) the composition is skewed to low complexity. Over residues 597 to 606 (RTAEVSHDIE) the composition is skewed to basic and acidic residues. Over residues 607-641 (NSSQNTTGNVLPVSSPQTRVARNGSINSLTKSISG) the composition is skewed to polar residues. Phosphoserine is present on residues serine 621, serine 631, and serine 634. Threonine 636 bears the Phosphothreonine mark. A phosphoserine mark is found at serine 638 and serine 647. Residues 642–653 (ENRRKSINEYHD) show a composition bias toward basic and acidic residues. The segment covering 654-668 (TVSTNSSALTETAQD) has biased composition (polar residues). Composition is skewed to pro residues over residues 691-738 (PHPV…PVSS) and 747-765 (SIPPVPPTPPAPPAPPAPL). Residues 769-778 (KHNEVEEHVK) are compositionally biased toward basic and acidic residues. The span at 795 to 808 (NTAPPLPRAPPVPP) shows a compositional bias: pro residues. Positions 832–853 (QNVTASTPSMMSTQQRVPTSVL) are enriched in polar residues. A Phosphothreonine modification is found at threonine 850. Position 889 is a phosphoserine (serine 889). 2 positions are modified to phosphothreonine: threonine 894 and threonine 895. Lysine 1012 participates in a covalent cross-link: Glycyl lysine isopeptide (Lys-Gly) (interchain with G-Cter in ubiquitin).

In terms of assembly, binds to the SH3 domains of the type I myosins MYO3 and MYO5.

The protein localises to the cytoplasm. It is found in the cytoskeleton. Its subcellular location is the actin patch. Involved in the regulation of actin cytoskeleton. The chain is Myosin tail region-interacting protein MTI1 (BBC1) from Saccharomyces cerevisiae (strain ATCC 204508 / S288c) (Baker's yeast).